The following is a 305-amino-acid chain: Acetyl-coenzyme A carboxylase carboxyl transferase subunit beta (305 aa).

The CoA carboxyltransferase N-terminal domain occupies L27–R296. Residues C31, C34, C50, and C53 each coordinate Zn(2+). The segment at C31–C53 adopts a C4-type zinc-finger fold.

Belongs to the AccD/PCCB family. As to quaternary structure, acetyl-CoA carboxylase is a heterohexamer composed of biotin carboxyl carrier protein (AccB), biotin carboxylase (AccC) and two subunits each of ACCase subunit alpha (AccA) and ACCase subunit beta (AccD). Requires Zn(2+) as cofactor.

Its subcellular location is the cytoplasm. It carries out the reaction N(6)-carboxybiotinyl-L-lysyl-[protein] + acetyl-CoA = N(6)-biotinyl-L-lysyl-[protein] + malonyl-CoA. It participates in lipid metabolism; malonyl-CoA biosynthesis; malonyl-CoA from acetyl-CoA: step 1/1. In terms of biological role, component of the acetyl coenzyme A carboxylase (ACC) complex. Biotin carboxylase (BC) catalyzes the carboxylation of biotin on its carrier protein (BCCP) and then the CO(2) group is transferred by the transcarboxylase to acetyl-CoA to form malonyl-CoA. The chain is Acetyl-coenzyme A carboxylase carboxyl transferase subunit beta from Chloroflexus aurantiacus (strain ATCC 29366 / DSM 635 / J-10-fl).